Reading from the N-terminus, the 145-residue chain is uncharacterized protein (145 aa).

A helical transmembrane segment spans residues 104-124; the sequence is IEVIILSHHFVIGFSFLLGLL.

The protein resides in the membrane. This is an uncharacterized protein from Saccharomyces cerevisiae (strain ATCC 204508 / S288c) (Baker's yeast).